A 132-amino-acid polypeptide reads, in one-letter code: Small ribosomal subunit protein uS8 (132 aa).

The protein belongs to the universal ribosomal protein uS8 family. As to quaternary structure, part of the 30S ribosomal subunit. Contacts proteins S5 and S12.

In terms of biological role, one of the primary rRNA binding proteins, it binds directly to 16S rRNA central domain where it helps coordinate assembly of the platform of the 30S subunit. This is Small ribosomal subunit protein uS8 from Streptococcus agalactiae serotype Ia (strain ATCC 27591 / A909 / CDC SS700).